Reading from the N-terminus, the 346-residue chain is GTPase Obg (346 aa).

The 158-residue stretch at 1-158 (MFIDKAKIYV…RWIELELKLL (158 aa)) folds into the Obg domain. The OBG-type G domain occupies 159–330 (ADVGIIGFPN…LINLIRETRD (172 aa)). Residues 165-172 (GFPNAGKS), 190-194 (FTTLT), 212-215 (DIPG), 282-285 (NKID), and 311-313 (SLI) contribute to the GTP site. Positions 172 and 192 each coordinate Mg(2+).

It belongs to the TRAFAC class OBG-HflX-like GTPase superfamily. OBG GTPase family. Monomer. Mg(2+) serves as cofactor.

The protein localises to the cytoplasm. An essential GTPase which binds GTP, GDP and possibly (p)ppGpp with moderate affinity, with high nucleotide exchange rates and a fairly low GTP hydrolysis rate. Plays a role in control of the cell cycle, stress response, ribosome biogenesis and in those bacteria that undergo differentiation, in morphogenesis control. The polypeptide is GTPase Obg (Sulfurihydrogenibium sp. (strain YO3AOP1)).